The primary structure comprises 159 residues: 2-C-methyl-D-erythritol 2,4-cyclodiphosphate synthase (159 aa).

A divalent metal cation contacts are provided by Asp-8 and His-10. 4-CDP-2-C-methyl-D-erythritol 2-phosphate is bound by residues 8–10 (DVH) and 34–35 (HS). His-42 serves as a coordination point for a divalent metal cation. 4-CDP-2-C-methyl-D-erythritol 2-phosphate is bound by residues 56–58 (DIG), 61–65 (FPDTD), 100–106 (AQAPKML), 132–135 (TTTE), Phe-139, and Arg-142.

It belongs to the IspF family. As to quaternary structure, homotrimer. It depends on a divalent metal cation as a cofactor.

It catalyses the reaction 4-CDP-2-C-methyl-D-erythritol 2-phosphate = 2-C-methyl-D-erythritol 2,4-cyclic diphosphate + CMP. The protein operates within isoprenoid biosynthesis; isopentenyl diphosphate biosynthesis via DXP pathway; isopentenyl diphosphate from 1-deoxy-D-xylulose 5-phosphate: step 4/6. Its function is as follows. Involved in the biosynthesis of isopentenyl diphosphate (IPP) and dimethylallyl diphosphate (DMAPP), two major building blocks of isoprenoid compounds. Catalyzes the conversion of 4-diphosphocytidyl-2-C-methyl-D-erythritol 2-phosphate (CDP-ME2P) to 2-C-methyl-D-erythritol 2,4-cyclodiphosphate (ME-CPP) with a corresponding release of cytidine 5-monophosphate (CMP). This Klebsiella pneumoniae (strain 342) protein is 2-C-methyl-D-erythritol 2,4-cyclodiphosphate synthase.